We begin with the raw amino-acid sequence, 193 residues long: Segregation and condensation protein B (193 aa).

It belongs to the ScpB family. As to quaternary structure, homodimer. Homodimerization may be required to stabilize the binding of ScpA to the Smc head domains. Component of a cohesin-like complex composed of ScpA, ScpB and the Smc homodimer, in which ScpA and ScpB bind to the head domain of Smc. The presence of the three proteins is required for the association of the complex with DNA.

It is found in the cytoplasm. Its function is as follows. Participates in chromosomal partition during cell division. May act via the formation of a condensin-like complex containing Smc and ScpA that pull DNA away from mid-cell into both cell halves. This chain is Segregation and condensation protein B, found in Clostridium botulinum (strain 657 / Type Ba4).